A 396-amino-acid polypeptide reads, in one-letter code: Bifunctional enzyme Fae/Hps (396 aa).

The segment at 1–161 (MMLIGEALIG…HEKDRAAHAV (161 aa)) is formaldehyde-activating enzyme. H17 serves as the catalytic Proton donor. Positions 19, 48, 66, 68, and 83 each coordinate substrate. The 3-hexulose-6-phosphate synthase stretch occupies residues 162-396 (MGFKISKLWD…IDQFRIMTDF (235 aa)).

The protein in the N-terminal section; belongs to the formaldehyde-activating enzyme family. It in the C-terminal section; belongs to the HPS/KGPDC family. HPS subfamily.

The catalysed reaction is 5,6,7,8-tetrahydromethanopterin + formaldehyde = 5,10-methylenetetrahydromethanopterin + H2O. It catalyses the reaction D-ribulose 5-phosphate + formaldehyde = D-arabino-hex-3-ulose 6-phosphate. Its pathway is carbohydrate biosynthesis; D-ribose 5-phosphate biosynthesis. In terms of biological role, catalyzes the condensation of formaldehyde with tetrahydromethanopterin (H(4)MPT) to 5,10-methylenetetrahydromethanopterin. Catalyzes the reversible formation of ribulose-5-phosphate and formaldehyde from 3-hexulose-6-phosphate. The polypeptide is Bifunctional enzyme Fae/Hps (Methanococcoides burtonii (strain DSM 6242 / NBRC 107633 / OCM 468 / ACE-M)).